A 137-amino-acid chain; its full sequence is Phosphoribosyl-ATP pyrophosphatase (137 aa).

Basic and acidic residues predominate over residues 114-124; it reads EGTSGIEEKAL. The interval 114-137 is disordered; that stretch reads EGTSGIEEKALRKSLQRAAEEAQP.

Belongs to the PRA-PH family.

Its subcellular location is the cytoplasm. The enzyme catalyses 1-(5-phospho-beta-D-ribosyl)-ATP + H2O = 1-(5-phospho-beta-D-ribosyl)-5'-AMP + diphosphate + H(+). It participates in amino-acid biosynthesis; L-histidine biosynthesis; L-histidine from 5-phospho-alpha-D-ribose 1-diphosphate: step 2/9. In Paracidovorax citrulli (strain AAC00-1) (Acidovorax citrulli), this protein is Phosphoribosyl-ATP pyrophosphatase.